Consider the following 156-residue polypeptide: Small ribosomal subunit protein uS7 (156 aa).

It belongs to the universal ribosomal protein uS7 family. As to quaternary structure, part of the 30S ribosomal subunit. Contacts proteins S9 and S11.

One of the primary rRNA binding proteins, it binds directly to 16S rRNA where it nucleates assembly of the head domain of the 30S subunit. Is located at the subunit interface close to the decoding center, probably blocks exit of the E-site tRNA. This chain is Small ribosomal subunit protein uS7, found in Clostridium beijerinckii (strain ATCC 51743 / NCIMB 8052) (Clostridium acetobutylicum).